Consider the following 364-residue polypeptide: Peptide chain release factor 2 (364 aa).

Gln-251 carries the post-translational modification N5-methylglutamine.

The protein belongs to the prokaryotic/mitochondrial release factor family. Methylated by PrmC. Methylation increases the termination efficiency of RF2.

The protein resides in the cytoplasm. Peptide chain release factor 2 directs the termination of translation in response to the peptide chain termination codons UGA and UAA. In Campylobacter hominis (strain ATCC BAA-381 / DSM 21671 / CCUG 45161 / LMG 19568 / NCTC 13146 / CH001A), this protein is Peptide chain release factor 2.